A 467-amino-acid polypeptide reads, in one-letter code: NADH-quinone oxidoreductase subunit H (467 aa).

Transmembrane regions (helical) follow at residues 18 to 38 (WWLV…TVLF), 88 to 108 (AVYV…IAVI), 131 to 151 (LPIA…GIVL), 172 to 192 (MISY…YSGS), 206 to 226 (WYIV…VGET), 256 to 276 (FMLA…TLFL), 296 to 316 (WWPL…FIWL), 328 to 348 (LMKL…MLVA), and 363 to 383 (IALY…LVDM). The interval 389–467 (GKAADQPAET…PTDGKEASDG (79 aa)) is disordered. Residues 418–430 (PVPPMPGQQVPPV) are compositionally biased toward pro residues.

Belongs to the complex I subunit 1 family. NDH-1 is composed of 14 different subunits. Subunits NuoA, H, J, K, L, M, N constitute the membrane sector of the complex.

It is found in the cell membrane. It catalyses the reaction a quinone + NADH + 5 H(+)(in) = a quinol + NAD(+) + 4 H(+)(out). In terms of biological role, NDH-1 shuttles electrons from NADH, via FMN and iron-sulfur (Fe-S) centers, to quinones in the respiratory chain. The immediate electron acceptor for the enzyme in this species is believed to be ubiquinone. Couples the redox reaction to proton translocation (for every two electrons transferred, four hydrogen ions are translocated across the cytoplasmic membrane), and thus conserves the redox energy in a proton gradient. This subunit may bind ubiquinone. The polypeptide is NADH-quinone oxidoreductase subunit H (Streptomyces coelicolor (strain ATCC BAA-471 / A3(2) / M145)).